Consider the following 218-residue polypeptide: Large ribosomal subunit protein uL3 (218 aa).

This sequence belongs to the universal ribosomal protein uL3 family. As to quaternary structure, part of the 50S ribosomal subunit. Forms a cluster with proteins L14 and L19.

One of the primary rRNA binding proteins, it binds directly near the 3'-end of the 23S rRNA, where it nucleates assembly of the 50S subunit. The protein is Large ribosomal subunit protein uL3 of Rhodococcus jostii (strain RHA1).